The following is a 241-amino-acid chain: Small ribosomal subunit protein uS3 (241 aa).

Residues 39–108 (IREGVLKLLK…NLKVEVKVIE (70 aa)) form the KH type-2 domain. Residues 215 to 241 (SQRVSEKAPMNNDRRFNNKNNNRGGRK) form a disordered region. Over residues 232–241 (NKNNNRGGRK) the composition is skewed to low complexity.

It belongs to the universal ribosomal protein uS3 family. In terms of assembly, part of the 30S ribosomal subunit. Forms a tight complex with proteins S10 and S14.

Functionally, binds the lower part of the 30S subunit head. Binds mRNA in the 70S ribosome, positioning it for translation. In Mesoplasma florum (Acholeplasma florum), this protein is Small ribosomal subunit protein uS3.